The following is a 226-amino-acid chain: B-cell antigen receptor complex-associated protein alpha chain (226 aa).

An N-terminal signal peptide occupies residues 1 to 32 (MPGGPGVLQALPATIFLLFLLSAVYLGPGCQA). The Ig-like C2-type domain occupies 33-116 (LWMHKVPASL…RVQEGNESYQ (84 aa)). At 33–143 (LWMHKVPASL…LDMGEGTKNR (111 aa)) the chain is on the extracellular side. A disulfide bond links C54 and C106. N57, N63, N73, N88, N97, and N112 each carry an N-linked (GlcNAc...) asparagine glycan. A helical membrane pass occupies residues 144–165 (IITAEGIILLFCAVVPGTLLLF). The Cytoplasmic segment spans residues 166-226 (RKRWQNEKLG…NIGDVQLEKP (61 aa)). An ITAM domain is found at 177-205 (DAGDEYEDENLYEGLNLDDCSMYEDISRG). Phosphotyrosine; by SRC-type Tyr-kinases occurs at positions 188 and 199. R204 is subject to Asymmetric dimethylarginine; by PRMT1. Phosphotyrosine; by Tyr-kinases is present on Y210.

Heterodimer of alpha and beta chains; disulfide-linked. Part of the B-cell antigen receptor complex where the alpha/beta chain heterodimer is non-covalently associated with an antigen-specific membrane-bound surface immunoglobulin of two heavy chains and two light chains. Interacts through its phosphorylated ITAM domain with the SH2 domains of SYK which stimulates SYK autophosphorylation and activation. Also interacts, when phosphorylated on Tyr-210, with the SH2 domain of BLNK/SLP65, bringing BLNK into proximity with SYK and allowing SYK to phosphorylate BLNK which is necessary for trafficking of the BCR to late endosomes. Interacts with Src-family tyrosine kinases including FYN and LYN, increasing their activity. Phosphorylated on tyrosine, serine and threonine residues upon B-cell activation. Phosphorylation of tyrosine residues by Src-family kinases is an early and essential feature of the BCR signaling cascade. The phosphorylated tyrosines serve as docking sites for SH2-domain containing kinases, leading to their activation which in turn leads to phosphorylation of downstream targets. Phosphorylated by LYN. Phosphorylation of serine and threonine residues may prevent subsequent tyrosine phosphorylation. Post-translationally, arginine methylation in the ITAM domain may interfere with the binding of SYK. It promotes signals leading to B-cell differentiation. As to expression, B-cells.

It is found in the cell membrane. Its function is as follows. Required in cooperation with CD79B for initiation of the signal transduction cascade activated by binding of antigen to the B-cell antigen receptor complex (BCR) which leads to internalization of the complex, trafficking to late endosomes and antigen presentation. Also required for BCR surface expression and for efficient differentiation of pro- and pre-B-cells. Stimulates SYK autophosphorylation and activation. Binds to BLNK, bringing BLNK into proximity with SYK and allowing SYK to phosphorylate BLNK. Also interacts with and increases activity of some Src-family tyrosine kinases. Represses BCR signaling during development of immature B-cells. This is B-cell antigen receptor complex-associated protein alpha chain (CD79A) from Homo sapiens (Human).